Reading from the N-terminus, the 661-residue chain is Sperm transmembrane protein 9 (661 aa).

An N-terminal signal peptide occupies residues 1–16 (MNVILVLVVLFFAGDC). The Extracellular segment spans residues 17–618 (AKIRKIIDFL…MTNRLMKNYE (602 aa)). One can recognise an EGF-like 1 domain in the interval 52–90 (NFNPCLENPKICSNRGKCLHENGNFYCICPVTHYGKTCE). 3 disulfide bridges follow: Cys56–Cys69, Cys63–Cys78, and Cys80–Cys89. N-linked (GlcNAc...) asparagine glycans are attached at residues Asn105, Asn106, Asn134, and Asn190. Positions 210 to 259 (QISACFDTQCDNGGICEDVVDWKTKTVTATCKCPSAIELIGGTVTGENCE) constitute an EGF-like 2 domain. 3 disulfides stabilise this stretch: Cys214–Cys225, Cys219–Cys240, and Cys242–Cys258. N-linked (GlcNAc...) asparagine glycans are attached at residues Asn279, Asn290, Asn316, and Asn338. A Cell attachment site motif is present at residues 377-379 (RGD). EGF-like domains are found at residues 377–414 (RGDR…EKCE), 519–557 (HTNP…SLCE), and 559–600 (VDDS…LDCN). 9 disulfides stabilise this stretch: Cys385–Cys402, Cys393–Cys404, Cys413–Cys419, Cys523–Cys534, Cys528–Cys545, Cys547–Cys556, Cys563–Cys576, Cys571–Cys588, and Cys590–Cys599. N-linked (GlcNAc...) asparagine glycosylation is present at Asn549. A helical transmembrane segment spans residues 619–639 (FSLPLVACFVSLAILLPVIVI). Topologically, residues 640 to 661 (SRRRQGRVEEAKKTSEVKTENP) are cytoplasmic.

In terms of tissue distribution, expressed in spermatids, during spermogenesis expression is primarily localized to the pseudopod.

The protein localises to the cytoplasm. It is found in the membrane. Functionally, required for fertilization. May be required for cell adhesion and/or function as a signaling molecule. This chain is Sperm transmembrane protein 9 (spe-9), found in Caenorhabditis elegans.